The following is a 358-amino-acid chain: Endo-1,4-beta-xylanase B (358 aa).

Positions 1–17 (MRFSASLLLALTGSAAA) are cleaved as a signal peptide. Residues 40 to 352 (QGLDAAMKAA…KAAYNAFLRG (313 aa)) form the GH10 domain. N136 carries N-linked (GlcNAc...) asparagine glycosylation. Residue E166 is the Proton donor of the active site. Catalysis depends on E274, which acts as the Nucleophile.

Belongs to the glycosyl hydrolase 10 (cellulase F) family.

The protein localises to the secreted. The enzyme catalyses Endohydrolysis of (1-&gt;4)-beta-D-xylosidic linkages in xylans.. It functions in the pathway glycan degradation; xylan degradation. Its activity is regulated as follows. Partial inhibition of activity is detected in the presence of Ag(+), Cu2(+) and SDS. Like most fungal xylanases, activity is completely inhibited by Hg(2+) since Hg(2+) could interact with tryptophan residues and oxidize the indole ring. Beta-mercaptoethanol enhances the enzymatic activity by counteracting the oxidation effects of the S-S linkage between cysteine residues. In terms of biological role, endo-1,4-beta-xylanase involved in the hydrolysis of xylan, a major structural heterogeneous polysaccharide found in plant biomass representing the second most abundant polysaccharide in the biosphere, after cellulose. Is more active on soluble wheat arabinoxylan (defined as 100%) than on birchwood xylan (75.4%) and beechwood xylan (70.8%), and less active on insoluble wheat arabinoxylan (17.4%). Xylose is the major hydrolysis product of XynB. The protein is Endo-1,4-beta-xylanase B of Humicola insolens (Soft-rot fungus).